The chain runs to 280 residues: Bifunctional protein FolD (280 aa).

Residues 159-161 (GRS), S184, and I225 each bind NADP(+).

Belongs to the tetrahydrofolate dehydrogenase/cyclohydrolase family. As to quaternary structure, homodimer.

The catalysed reaction is (6R)-5,10-methylene-5,6,7,8-tetrahydrofolate + NADP(+) = (6R)-5,10-methenyltetrahydrofolate + NADPH. It catalyses the reaction (6R)-5,10-methenyltetrahydrofolate + H2O = (6R)-10-formyltetrahydrofolate + H(+). The protein operates within one-carbon metabolism; tetrahydrofolate interconversion. Functionally, catalyzes the oxidation of 5,10-methylenetetrahydrofolate to 5,10-methenyltetrahydrofolate and then the hydrolysis of 5,10-methenyltetrahydrofolate to 10-formyltetrahydrofolate. This is Bifunctional protein FolD from Methanosphaerula palustris (strain ATCC BAA-1556 / DSM 19958 / E1-9c).